A 307-amino-acid polypeptide reads, in one-letter code: Elongation factor Ts (307 aa).

The tract at residues 80–83 (TDFV) is involved in Mg(2+) ion dislocation from EF-Tu.

Belongs to the EF-Ts family.

Its subcellular location is the cytoplasm. Associates with the EF-Tu.GDP complex and induces the exchange of GDP to GTP. It remains bound to the aminoacyl-tRNA.EF-Tu.GTP complex up to the GTP hydrolysis stage on the ribosome. The chain is Elongation factor Ts (tsf) from Zymomonas mobilis subsp. mobilis (strain ATCC 31821 / ZM4 / CP4).